Consider the following 449-residue polypeptide: VIRF-1 (449 aa).

The interval 1-60 (MDPGQRPNPFGAPGAIPKKPCLSQGSPGTSGSGAPCDEPSRSESPGEGPSGTGGSAAAGD) is disordered. Positions 89–195 (KASIKDWIVC…HHFLVFRVRK (107 aa)) form a DNA-binding region, IRF tryptophan pentad repeat. Lys406 and Lys442 each carry N6-propionyllysine; by host.

It belongs to the IRF family. In terms of assembly, forms homodimers. Interacts with host IRF3, IRF7, and CREBBP. Interacts with host SYNCRIP. Interacts with host USP7. Interacts (via C-terminus) with host HERC5. Interacts with host GABARAPL1. Interacts with host SIRT6. In terms of processing, ISGylated. Propionylated in lysine residues Lys-406 and Lys-442, which is required for effective inhibition of IFN-beta production and antiviral signaling.

Its subcellular location is the host cytoplasm. Functionally, plays a role in the inhibition of host innate response by repressing the expression of interferon-inducible genes and blocking host IRF1- and IRF3-mediated transcription. Blocks the interaction between host IRF3 and CREBBP. Regulates the host cellular metabolism by increasing glucose uptake, ATP production and lactate secretion through down-regulation of heterogeneous nuclear ribonuclear protein Q1/SYNCRIP. Mechanistically, induces ubiquitination and degradation of SYNCRIP through the ubiquitin-proteasome pathway by recruiting KLHL3/CUL3 ubiquitin ligase complex. Disrupts host TP53 signaling pathway during viral infection by interacting with host USP7 and thereby decreasing the availability of USP7 for deubiquitinating and stabilizing TP53. Plays a role in the global inhibition of protein ISGylation by interacting with host HERC5 leading to its inhibition. Promotes its own propionylation by blocking SIRT6 interaction with ubiquitin-specific peptidase 10/USP10 leading to SIRT6 degradation via a ubiquitin-proteasome pathway. In turn, propionylation is required to block IRF3-CBP/p300 recruitment and to repress the STING DNA sensing pathway. Plays a role in the activation of mitophagy during infection via interaction with the host proteins NIX/BNIP3L, TUFM and GABARAPL1 thereby inhibiting antiviral responses and contributing to productive replication. The sequence is that of VIRF-1 (vIRF-1) from Homo sapiens (Human).